The chain runs to 322 residues: uncharacterized protein (322 aa).

Residues 269-289 are disordered; sequence QDEEEEPRDERRPRRRLGKAQ.

This is an uncharacterized protein from Sinorhizobium fredii (strain NBRC 101917 / NGR234).